Reading from the N-terminus, the 327-residue chain is BarH-like 1 homeobox protein (327 aa).

Disordered stretches follow at residues 1–90 (MEGS…AQSR), 112–184 (APYS…ARTA), and 305–327 (GASE…AQPR). Positions 33–54 (RSPLELSPRSESSSDCSSPASP) are enriched in low complexity. Over residues 79–90 (QPGQLSAPAQSR) the composition is skewed to polar residues. Basic and acidic residues-rich tracts occupy residues 133 to 143 (AAEDFRDKLDK) and 152 to 166 (SEYK…EISS). Positions 178–237 (PRKARTAFTDHQLAQLERSFERQKYLSVQDRMELAASLNLTDTQVKTWYQNRRTKWKRQT) form a DNA-binding region, homeobox. Positions 316 to 327 (LAGVLPRAAQPR) are enriched in low complexity.

The protein belongs to the BAR homeobox family.

The protein localises to the nucleus. The chain is BarH-like 1 homeobox protein (BARHL1) from Homo sapiens (Human).